Here is a 273-residue protein sequence, read N- to C-terminus: MSVHTTKRRLSPASIESLKGDRPIVSLTAYTTPIARLLDPHVDFLLVGDSLGMVLYGLDTTVGVTLDMMIAHGQAVMRGSERCCVVVDLPFGAYQESKEQAFRSAARILKETGCSAVKLEGGAEMAETVEFLVSRGIPVLGHVGLMPQLVNTTGGYRSVGRNEKEVAKIRRDAKAIDDAGAFAIVVEGTVEPVAREITATLRAPTIGIGASPACDGQILVSDDMLGLFNDFKPRFVKHFAELAPAISKAVEDYANEVKARTFPGIEHTFQVKR.

Mg(2+) is bound by residues Asp49 and Asp88. 3-methyl-2-oxobutanoate is bound by residues 49–50, Asp88, and Lys118; that span reads DS. Mg(2+) is bound at residue Glu120. The active-site Proton acceptor is the Glu187.

Belongs to the PanB family. In terms of assembly, homodecamer; pentamer of dimers. Mg(2+) serves as cofactor.

It is found in the cytoplasm. The catalysed reaction is 3-methyl-2-oxobutanoate + (6R)-5,10-methylene-5,6,7,8-tetrahydrofolate + H2O = 2-dehydropantoate + (6S)-5,6,7,8-tetrahydrofolate. Its pathway is cofactor biosynthesis; (R)-pantothenate biosynthesis; (R)-pantoate from 3-methyl-2-oxobutanoate: step 1/2. Catalyzes the reversible reaction in which hydroxymethyl group from 5,10-methylenetetrahydrofolate is transferred onto alpha-ketoisovalerate to form ketopantoate. This is 3-methyl-2-oxobutanoate hydroxymethyltransferase from Sinorhizobium medicae (strain WSM419) (Ensifer medicae).